We begin with the raw amino-acid sequence, 238 residues long: Probable phosphatase phospho2 (238 aa).

Aspartate 8 (nucleophile) is an active-site residue. Positions 8 and 10 each coordinate Mg(2+). The active-site Proton donor is the aspartate 10. Positions 19 and 99 each coordinate substrate. Aspartate 179 is a Mg(2+) binding site.

Belongs to the HAD-like hydrolase superfamily. PHOSPHO family. The cofactor is Mg(2+).

Its function is as follows. Probable phosphatase. The sequence is that of Probable phosphatase phospho2 (phospho2) from Xenopus tropicalis (Western clawed frog).